The chain runs to 327 residues: GMP reductase (327 aa).

Residue cysteine 176 is the Thioimidate intermediate of the active site. 205–228 (IIADGGIRTHGDIAKSIRFGASMV) provides a ligand contact to NADP(+).

This sequence belongs to the IMPDH/GMPR family. GuaC type 2 subfamily.

It catalyses the reaction IMP + NH4(+) + NADP(+) = GMP + NADPH + 2 H(+). Catalyzes the irreversible NADPH-dependent deamination of GMP to IMP. It functions in the conversion of nucleobase, nucleoside and nucleotide derivatives of G to A nucleotides, and in maintaining the intracellular balance of A and G nucleotides. The polypeptide is GMP reductase (Streptococcus pyogenes serotype M49 (strain NZ131)).